The chain runs to 344 residues: Holliday junction branch migration complex subunit RuvB (344 aa).

The interval 1–182 (MRIELLNTPV…FGISNRFDYY (182 aa)) is large ATPase domain (RuvB-L). ATP-binding positions include I21, R22, G63, K66, T67, T68, 129–131 (EDF), R172, Y182, and R219. Residue T67 participates in Mg(2+) binding. The segment at 183-253 (PPELLETILM…TAMKTLDSLE (71 aa)) is small ATPAse domain (RuvB-S). Residues 256 to 344 (EEGLDEMDKK…GTLFDGQEHV (89 aa)) form a head domain (RuvB-H) region. DNA contacts are provided by R311 and R316.

Belongs to the RuvB family. Homohexamer. Forms an RuvA(8)-RuvB(12)-Holliday junction (HJ) complex. HJ DNA is sandwiched between 2 RuvA tetramers; dsDNA enters through RuvA and exits via RuvB. An RuvB hexamer assembles on each DNA strand where it exits the tetramer. Each RuvB hexamer is contacted by two RuvA subunits (via domain III) on 2 adjacent RuvB subunits; this complex drives branch migration. In the full resolvosome a probable DNA-RuvA(4)-RuvB(12)-RuvC(2) complex forms which resolves the HJ.

It is found in the cytoplasm. The enzyme catalyses ATP + H2O = ADP + phosphate + H(+). The RuvA-RuvB-RuvC complex processes Holliday junction (HJ) DNA during genetic recombination and DNA repair, while the RuvA-RuvB complex plays an important role in the rescue of blocked DNA replication forks via replication fork reversal (RFR). RuvA specifically binds to HJ cruciform DNA, conferring on it an open structure. The RuvB hexamer acts as an ATP-dependent pump, pulling dsDNA into and through the RuvAB complex. RuvB forms 2 homohexamers on either side of HJ DNA bound by 1 or 2 RuvA tetramers; 4 subunits per hexamer contact DNA at a time. Coordinated motions by a converter formed by DNA-disengaged RuvB subunits stimulates ATP hydrolysis and nucleotide exchange. Immobilization of the converter enables RuvB to convert the ATP-contained energy into a lever motion, pulling 2 nucleotides of DNA out of the RuvA tetramer per ATP hydrolyzed, thus driving DNA branch migration. The RuvB motors rotate together with the DNA substrate, which together with the progressing nucleotide cycle form the mechanistic basis for DNA recombination by continuous HJ branch migration. Branch migration allows RuvC to scan DNA until it finds its consensus sequence, where it cleaves and resolves cruciform DNA. This Chlorobium luteolum (strain DSM 273 / BCRC 81028 / 2530) (Pelodictyon luteolum) protein is Holliday junction branch migration complex subunit RuvB.